A 505-amino-acid chain; its full sequence is Flagellin (505 aa).

This sequence belongs to the bacterial flagellin family.

The protein resides in the secreted. The protein localises to the bacterial flagellum. Functionally, flagellin is the subunit protein which polymerizes to form the filaments of bacterial flagella. The protein is Flagellin (fliC) of Salmonella enteritidis.